Here is a 636-residue protein sequence, read N- to C-terminus: MNPSAPSYPMASLYVGDLHPDVTEAMLYEKFSPAGPILSIRVCRDMITRRSLGYAYVNFQQPADAERALDTMNFDVIKGKPVRIMWSQRDPSLRKSGVGNIFIKNLDKSIDNKALYDTFSAFGNILSCKVVCDENGSKGYGFVHFETQEAAERAIEKMNGMLLNDRKVFVGRFKSRKEREAELGARAKEFTNVYIKNFGEDMDDERLKDLFGKFGPALSVKVMTDESGKSKGFGFVSFERHEDAQKAVDEMNGKELNGKQIYVGRAQKKVERQTELKRKFEQMKQDRITRYQGVNLYVKNLDDGIDDERLRKEFSPFGTITSAKVMMEGGRSKGFGFVCFSSPEEATKAVTEMNGRIVATKPLYVALAQRKEERQAHLTNQYMQRMASVRAVPNPVINPYQPAPPSGYFMAAIPQTQNRAAYYPPSQIAQLRPSPRWTAQGARPHPFQNMPGAIRPAAPRPPFSTMRPASSQVPRVMSTQRVANTSTQTMGPRPAAAAAAATPAVRTVPQYKYAAGVRNPQQHLNAQPQVTMQQPAVHVQGQEPLTASMLASAPPQEQKQMLGERLFPLIQAMHPTLAGKITGMLLEIDNSELLHMLESPESLRSKVDEAVAVLQAHQAKEAAQKAVNSATGVPTV.

Met1 carries the N-acetylmethionine modification. RRM domains follow at residues 11-89 (ASLY…WSQR), 99-175 (GNIF…RFKS), 191-268 (TNVY…RAQK), and 294-370 (VNLY…LAQR). The CSDE1-binding stretch occupies residues 166–289 (RKVFVGRFKS…FEQMKQDRIT (124 aa)). Lys299 carries the post-translational modification N6-methyllysine. Ser315 is modified (phosphoserine). Thr319 bears the Phosphothreonine mark. Omega-N-methylarginine is present on residues Arg385, Arg419, Arg432, and Arg436. Omega-N-methylated arginine; by CARM1 occurs at positions 455 and 460. Arg475 and Arg481 each carry omega-N-methylarginine. An Asymmetric dimethylarginine; alternate modification is found at Arg493. Arg493 bears the Dimethylated arginine; alternate mark. Arg493 is subject to Omega-N-methylarginine; alternate. The residue at position 506 (Arg506) is an Omega-N-methylarginine. Lys512 carries the N6-acetyllysine modification. Arg518 carries the omega-N-methylarginine modification. The region spanning 542–619 (QEPLTASMLA…AVAVLQAHQA (78 aa)) is the PABC domain.

It belongs to the polyadenylate-binding protein type-1 family. As to quaternary structure, may form homodimers. Component of a multisubunit autoregulatory ribonucleoprotein complex (ARC), at least composed of IGF2BP1, PABPC1 and CSDE1. Directly interacts with IGF2BP1. Part of a complex associated with the FOS mCRD domain and consisting of HNRPD, SYNCRIP, PAIP1 and CSDE1/UNR. Interacts with PAIP1 and PAIP2 (via the PABPC1-interacting motifs PAM1 and PAM2). Interacts with PAIP1 with a 1:1 stoichiometry and with PAIP2 with a 1:2 stoichiometry. The interaction with CSDE1 is direct and RNA-independent. Found in a mRNP complex with YBX2. Interacts with TENT2/GLD2. Identified in the spliceosome C complex. Identified in a mRNP complex, at least composed of DHX9, DDX3X, ELAVL1, HNRNPU, IGF2BP1, ILF3, PABPC1, PCBP2, PTBP2, STAU1, STAU2, SYNCRIP and YBX1. The interaction with DDX3X is direct and RNA-independent. This interaction increases in stressed cells and decreases during cell recovery. Identified in a IGF2BP1-dependent mRNP granule complex containing untranslated mRNAs. Interacts with NXF1/TAP. Interacts with PIWIL1. Interacts with AGO1, AGO2, GSPT1 and GSPT2. Interacts with LARP4B. Interacts (via the second and third RRM domains and the C-terminus) with PAIP2B (via central acidic portion and C-terminus). Forms a complex with LARP1 and SHFL. Interacts with LARP4. Interacts with ZFC3H1 in a RNase-sensitive manner. Interacts with TRIM71 (via NHL repeats) in an RNA-dependent manner. Interacts with TENT5C; the interaction has no effect on TENT5C poly(A) polymerase function. Interacts with G3BP1 and G3BP2. Interacts with ENDOV; the interaction is RNA-dependent and stimulates ENDOV activity. Interacts with UPF1; the interaction is RNA-dependent. Interacts with IGF2BP2 and IGF2BP3. May interact with SETX. Interacts with RBM46. Interacts with PAN3. Phosphorylated by MAPKAPK2. In terms of processing, methylated by CARM1. Arg-493 is dimethylated, probably to asymmetric dimethylarginine.

The protein resides in the cytoplasm. The protein localises to the stress granule. Its subcellular location is the nucleus. It is found in the cell projection. It localises to the lamellipodium. In terms of biological role, binds the poly(A) tail of mRNA, including that of its own transcript, and regulates processes of mRNA metabolism such as pre-mRNA splicing and mRNA stability. Its function in translational initiation regulation can either be enhanced by PAIP1 or repressed by PAIP2. Can probably bind to cytoplasmic RNA sequences other than poly(A) in vivo. Binds to N6-methyladenosine (m6A)-containing mRNAs and contributes to MYC stability by binding to m6A-containing MYC mRNAs. Involved in translationally coupled mRNA turnover. Implicated with other RNA-binding proteins in the cytoplasmic deadenylation/translational and decay interplay of the FOS mRNA mediated by the major coding-region determinant of instability (mCRD) domain. Involved in regulation of nonsense-mediated decay (NMD) of mRNAs containing premature stop codons; for the recognition of premature termination codons (PTC) and initiation of NMD a competitive interaction between UPF1 and PABPC1 with the ribosome-bound release factors is proposed. By binding to long poly(A) tails, may protect them from uridylation by ZCCHC6/ZCCHC11 and hence contribute to mRNA stability. In Bos taurus (Bovine), this protein is Polyadenylate-binding protein 1 (PABPC1).